We begin with the raw amino-acid sequence, 132 residues long: Glycine cleavage system H protein (132 aa).

In terms of domain architecture, Lipoyl-binding spans 24 to 106; that stretch reads RVRVGITDYA…YGAGWLFELE (83 aa). Residue lysine 65 is modified to N6-lipoyllysine.

Belongs to the GcvH family. The glycine cleavage system is composed of four proteins: P, T, L and H. (R)-lipoate is required as a cofactor.

Its function is as follows. The glycine cleavage system catalyzes the degradation of glycine. The H protein shuttles the methylamine group of glycine from the P protein to the T protein. The polypeptide is Glycine cleavage system H protein (Nocardia farcinica (strain IFM 10152)).